The chain runs to 717 residues: Mitochondrial potassium channel ATP-binding subunit (717 aa).

The N-terminal 25 residues, 1-25, are a transit peptide targeting the mitochondrion; it reads MLVHLFRFGIRGGPVPGWSLQSLRF. A run of 4 helical transmembrane segments spans residues 127-147, 178-198, 278-298, and 365-385; these read LLALGAAIVLALGAALVNVQI, VQLLLLYGVQGLLTFGYLVLL, LMLAVVTPALMGVGTLMGSGL, and NIAFNCMVLGTLFIGGSLVAG. The ABC transmembrane type-1 domain occupies 132–419; it reads AAIVLALGAA…LSVLFGQVVR (288 aa). The region spanning 454-691 is the ABC transporter domain; it reads ITFQNVTFSY…GGLYSELIRR (238 aa). Position 489–496 (489–496) interacts with ATP; it reads GQSGGGKT. Residues 695 to 717 form a disordered region; sequence DASLTSTPPAEKPEDPKSCQSKA.

It belongs to the ABC transporter superfamily. ABCB family. Multidrug resistance exporter (TC 3.A.1.201) subfamily. In terms of assembly, the mitochondrial potassium channel (mitoK(ATP)) is composed of 4 subunits of CCDC51/MITOK and 4 subunits of ABCB8/MITOSUR. Interacts with PAAT. Interacts with NRP1; NRP1 regulates ABCB8/MITOSUR protein levels in mitochondria.

The protein resides in the mitochondrion inner membrane. With respect to regulation, channel activity inhibited by ATP via ABCB8/MITOSUR subunit. Its function is as follows. ATP-binding subunit of the mitochondrial ATP-gated potassium channel (mitoK(ATP)). Together with pore-forming subunit CCDC51/MITOK of the mitoK(ATP) channel, mediates ATP-dependent potassium currents across the mitochondrial inner membrane. An increase in ATP intracellular levels closes the channel, inhibiting K(+) transport, whereas a decrease in ATP levels enhances K(+) uptake in the mitochondrial matrix. Plays a role in mitochondrial iron transport. Required for maintenance of normal cardiac function, possibly by influencing mitochondrial iron export and regulating the maturation of cytosolic iron sulfur cluster-containing enzymes. The polypeptide is Mitochondrial potassium channel ATP-binding subunit (Mus musculus (Mouse)).